The sequence spans 445 residues: Damage suppressor protein (445 aa).

Composition is skewed to polar residues over residues 1–15 (MAST…SSTG) and 25–47 (SQGS…SATS). Disordered stretches follow at residues 1–145 (MAST…HSVI) and 203–445 (YHSV…RKRK). The segment covering 61-73 (SSTTAGSSSTQGQ) has biased composition (low complexity). Polar residues predominate over residues 74–87 (KFSTTPTDPKTFSS). Positions 88-97 (DQKEKSKSPA) are enriched in basic and acidic residues. Low complexity predominate over residues 117–138 (DAKSSGQSQGQSKDSGKSSSDS). Over residues 207 to 228 (VGDKTDDKKEGEHSGDKKDDSK) the composition is skewed to basic and acidic residues. The interval 208–445 (GDKTDDKKEG…GGKAGGRKRK (238 aa)) is required and sufficient for DNA-binding and co-localization with nuclear DNA. Residues 245-256 (ETSGQAESSSGN) are compositionally biased toward polar residues. Residues 257–306 (EGAAPAKGRGRGRPPAAAKGVAKGAAKGAAASKGAKSGAESSKGGEQSSG) show a composition bias toward low complexity. The span at 329–338 (GEGGASGSEG) shows a compositional bias: gly residues. The interval 360-445 (EPPRRSSRLT…GGKAGGRKRK (86 aa)) is required for nucleosome binding and for the protection of chromatin from hydroxyl radical-mediated DNA damage. Over residues 367–431 (RLTSSGTGAG…ASKAPQNGAG (65 aa)) the composition is skewed to low complexity. Basic residues predominate over residues 432 to 445 (AKKKGGKAGGRKRK).

It is found in the nucleus. Functionally, unique chromatin-associating protein that contributes to the organism's exceptional tolerance to harsh environmental stresses. Binds with a higher affinity to nucleosomes than to free DNA. Protects chromatin from damage caused by hydroxyl radical-mediated cleavage induced by X-rays or treatment with hydrogen peroxide. Suppresses X-ray-induced DNA damage that includes single-strand breaks (SSBs) as well as more hazardous double-strand breaks (DSBs), and improves radiotolerance. Also shields DNA against reactive oxygen species (ROS). This is Damage suppressor protein from Ramazzottius varieornatus (Water bear).